Here is a 283-residue protein sequence, read N- to C-terminus: Protein FAM170A (283 aa).

Disordered stretches follow at residues 1-54 (MKRR…RSQH) and 123-171 (GTPP…AKTP). Positions 127 to 138 (SDVSTRNLLSDS) are enriched in polar residues. The segment covering 142 to 153 (GEEKEHEERTES) has biased composition (basic and acidic residues). The residue at position 170 (Thr170) is a Phosphothreonine. The C2H2-type; degenerate zinc-finger motif lies at 181–205 (FRCMACCRVFTTMEALQEHVQFGIR). Residues 223-283 (NMESESTQDE…VFHSPKDRNS (61 aa)) form a disordered region. Over residues 228–246 (STQDEQEEENGNEKEEEEK) the composition is skewed to acidic residues. A Phosphoserine modification is found at Ser268.

It belongs to the FAM170 family.

Its subcellular location is the nucleus. Acts as a nuclear transcription factor that positively regulates the expression of heat shock genes. Binds to heat shock promoter elements (HSE). The polypeptide is Protein FAM170A (FAM170A) (Macaca fascicularis (Crab-eating macaque)).